A 491-amino-acid chain; its full sequence is Zinc finger and SCAN domain-containing protein 22 (491 aa).

At Ser9 the chain carries Phosphoserine. The SCAN box domain occupies 49-131; it reads RLRFRHFRYE…VLVEDLTQVL (83 aa). Disordered stretches follow at residues 134–161 and 204–249; these read RGWDPGAEPTEASCKQSDLGESEPSNVT and FKKT…DKFD. Residues 214 to 224 show a composition bias toward basic and acidic residues; that stretch reads VPTDQRGRESG. The segment covering 225-241 has biased composition (polar residues); that stretch reads ASRNSSSAWPNLTSQEK. 8 C2H2-type zinc fingers span residues 268-290, 296-318, 324-346, 352-374, 380-402, 408-430, 436-458, and 464-486; these read SKCRECRKMFQSASALEAHQKTH, YACSECGKAFSRSTHLAQHQVVH, HECKECGKAFSRVTHLTQHQRIH, YKCGECGKTFSRSTHLTQHQRVH, YECDACGKAFSQSTHLTQHQRIH, YKCDACGRAFSDCSALIRHLRIH, YQCKVCPKAFAQSSSLIEHQRIH, and YKCSDCGKAFSRSSALMVHLRIH. Lys443 participates in a covalent cross-link: Glycyl lysine isopeptide (Lys-Gly) (interchain with G-Cter in SUMO2).

It belongs to the krueppel C2H2-type zinc-finger protein family.

It is found in the nucleus. Functionally, may be involved in transcriptional regulation. The sequence is that of Zinc finger and SCAN domain-containing protein 22 (ZSCAN22) from Homo sapiens (Human).